The sequence spans 903 residues: Protein translocase subunit SecA (903 aa).

ATP contacts are provided by residues Q87, 105–109 (GEGKT), and D507. Disordered stretches follow at residues 565–584 (ESRR…GDPG) and 855–877 (AEPG…LASQ). Zn(2+) is bound by residues C887, C889, C898, and H899.

The protein belongs to the SecA family. As to quaternary structure, monomer and homodimer. Part of the essential Sec protein translocation apparatus which comprises SecA, SecYEG and auxiliary proteins SecDF-YajC and YidC. Zn(2+) is required as a cofactor.

The protein resides in the cell inner membrane. It localises to the cytoplasm. It carries out the reaction ATP + H2O + cellular proteinSide 1 = ADP + phosphate + cellular proteinSide 2.. Part of the Sec protein translocase complex. Interacts with the SecYEG preprotein conducting channel. Has a central role in coupling the hydrolysis of ATP to the transfer of proteins into and across the cell membrane, serving both as a receptor for the preprotein-SecB complex and as an ATP-driven molecular motor driving the stepwise translocation of polypeptide chains across the membrane. The protein is Protein translocase subunit SecA of Chromobacterium violaceum (strain ATCC 12472 / DSM 30191 / JCM 1249 / CCUG 213 / NBRC 12614 / NCIMB 9131 / NCTC 9757 / MK).